Here is a 118-residue protein sequence, read N- to C-terminus: Fluoride-specific ion channel FluC 2 (118 aa).

4 consecutive transmembrane segments (helical) span residues 1 to 21 (MIEALLVATGGFFGAITRFAI), 33 to 53 (FPLATFLINITGAFLLGYIIG), 55 to 75 (GVTTGWQLLLGTGFMGAFTTF), and 91 to 111 (ISTFLLYLSATYIIGILFAFL). Positions 70 and 73 each coordinate Na(+).

This sequence belongs to the fluoride channel Fluc/FEX (TC 1.A.43) family.

It is found in the cell membrane. The enzyme catalyses fluoride(in) = fluoride(out). Its activity is regulated as follows. Na(+) is not transported, but it plays an essential structural role and its presence is essential for fluoride channel function. In terms of biological role, fluoride-specific ion channel. Important for reducing fluoride concentration in the cell, thus reducing its toxicity. This is Fluoride-specific ion channel FluC 2 from Bacillus cereus (strain ATCC 14579 / DSM 31 / CCUG 7414 / JCM 2152 / NBRC 15305 / NCIMB 9373 / NCTC 2599 / NRRL B-3711).